The following is a 666-amino-acid chain: Chaperone protein HtpG (666 aa).

Positions 1–374 (MSELNPVDNQ…SADLPLNVSR (374 aa)) are a; substrate-binding. Residues 375-593 (ELLQESRDVK…EGELSPQMIQ (219 aa)) are b. The c stretch occupies residues 594–666 (MLKQMGQDVP…LRRVNELLMR (73 aa)).

It belongs to the heat shock protein 90 family. Homodimer.

The protein localises to the cytoplasm. Functionally, molecular chaperone. Has ATPase activity. The polypeptide is Chaperone protein HtpG (Psychrobacter cryohalolentis (strain ATCC BAA-1226 / DSM 17306 / VKM B-2378 / K5)).